The chain runs to 196 residues: Retinol-binding protein 4 (196 aa).

Residues 1–21 (MAYTWRALLLLALAFLGSSMA) form the signal peptide. 3 disulfides stabilise this stretch: Cys25–Cys181, Cys91–Cys195, and Cys141–Cys150. Gln119 contributes to the substrate binding site.

Belongs to the calycin superfamily. Lipocalin family. Interacts with TTR. Interaction with TTR prevents its loss by filtration through the kidney glomeruli. Interacts with STRA6.

The protein resides in the secreted. In terms of biological role, retinol-binding protein that mediates retinol transport in blood plasma. Delivers retinol from the liver stores to the peripheral tissues. Transfers the bound all-trans retinol to STRA6, that then facilitates retinol transport across the cell membrane. The protein is Retinol-binding protein 4 (RBP4) of Gallus gallus (Chicken).